The primary structure comprises 104 residues: uncharacterized protein (104 aa).

2 helical membrane passes run 47-67 (IDHR…LAML) and 72-92 (VGHV…FVLA).

To M.leprae ML1584.

Its subcellular location is the cell membrane. This is an uncharacterized protein from Mycobacterium tuberculosis (strain CDC 1551 / Oshkosh).